We begin with the raw amino-acid sequence, 147 residues long: Large ribosomal subunit protein bL9 (147 aa).

The protein belongs to the bacterial ribosomal protein bL9 family.

Functionally, binds to the 23S rRNA. The protein is Large ribosomal subunit protein bL9 of Bdellovibrio bacteriovorus (strain ATCC 15356 / DSM 50701 / NCIMB 9529 / HD100).